Reading from the N-terminus, the 130-residue chain is L-ectoine synthase (130 aa).

The protein belongs to the ectoine synthase family.

The enzyme catalyses (2S)-4-acetamido-2-aminobutanoate = L-ectoine + H2O. Its pathway is amine and polyamine biosynthesis; ectoine biosynthesis; L-ectoine from L-aspartate 4-semialdehyde: step 3/3. In terms of biological role, catalyzes the circularization of gamma-N-acetyl-alpha,gamma-diaminobutyric acid (ADABA) to ectoine (1,4,5,6-tetrahydro-2-methyl-4-pyrimidine carboxylic acid), which is an excellent osmoprotectant. The polypeptide is L-ectoine synthase (Mycolicibacterium vanbaalenii (strain DSM 7251 / JCM 13017 / BCRC 16820 / KCTC 9966 / NRRL B-24157 / PYR-1) (Mycobacterium vanbaalenii)).